The chain runs to 280 residues: Nucleotide-binding protein Dgeo_0723 (280 aa).

8-15 is a binding site for ATP; sequence GLSGSGKS. Residue 57-60 participates in GTP binding; sequence DART.

This sequence belongs to the RapZ-like family.

Displays ATPase and GTPase activities. The chain is Nucleotide-binding protein Dgeo_0723 from Deinococcus geothermalis (strain DSM 11300 / CIP 105573 / AG-3a).